Reading from the N-terminus, the 1360-residue chain is Transmembrane protein 94 (1360 aa).

Over methionine 1–cysteine 64 the chain is Cytoplasmic. Residues phenylalanine 65–glycine 85 form a helical membrane-spanning segment. Residues glycine 86–glutamine 92 lie on the Lumenal side of the membrane. The chain crosses the membrane as a helical span at residues glycine 93–isoleucine 113. Residues glycine 114–arginine 273 lie on the Cytoplasmic side of the membrane. Serine 221 and serine 225 each carry phosphoserine. Residues phenylalanine 274–isoleucine 294 form a helical membrane-spanning segment. Topologically, residues threonine 295–asparagine 320 are lumenal. The chain crosses the membrane as a helical span at residues glycine 321 to glycine 341. Residues glutamate 342–cysteine 1096 lie on the Cytoplasmic side of the membrane. The DKQGIL motif lies at aspartate 417–leucine 422. Phosphoserine is present on residues serine 444, serine 445, and serine 454. Residues glutamate 487–proline 545 form a disordered region. The segment covering histidine 506 to histidine 515 has biased composition (basic residues). Residues serine 517, serine 522, serine 802, and serine 945 each carry the phosphoserine modification. Residues phenylalanine 1097–valine 1117 traverse the membrane as a helical segment. The Lumenal portion of the chain corresponds to glutamine 1118–serine 1124. Residues threonine 1125 to glycine 1145 traverse the membrane as a helical segment. Topologically, residues lysine 1146 to tyrosine 1171 are cytoplasmic. The helical transmembrane segment at phenylalanine 1172–glycine 1192 threads the bilayer. Over phenylalanine 1193–glycine 1232 the chain is Lumenal. 2 N-linked (GlcNAc...) asparagine glycosylation sites follow: asparagine 1206 and asparagine 1209. The helical transmembrane segment at leucine 1233–isoleucine 1253 threads the bilayer. At threonine 1254–threonine 1269 the chain is on the cytoplasmic side. A helical transmembrane segment spans residues asparagine 1270–valine 1290. The Lumenal portion of the chain corresponds to aspartate 1291–proline 1310. A helical transmembrane segment spans residues leucine 1311 to valine 1331. The Cytoplasmic segment spans residues lysine 1332–phenylalanine 1360. The short motif at glycine 1355–asparagine 1357 is the GMN; metal-binding motif element.

As to quaternary structure, forms homooligomers.

It is found in the endoplasmic reticulum membrane. Its function is as follows. Could function in the uptake of Mg(2+) from the cytosol into the endoplasmic reticulum and regulate intracellular Mg(2+) homeostasis. This Mus musculus (Mouse) protein is Transmembrane protein 94.